Reading from the N-terminus, the 293-residue chain is NAD kinase (293 aa).

The Proton acceptor role is filled by Asp73. NAD(+) contacts are provided by residues 73–74, 147–148, Arg175, Asp177, and 188–193; these read DG, NE, and TAYSMS.

The protein belongs to the NAD kinase family. A divalent metal cation is required as a cofactor.

Its subcellular location is the cytoplasm. It carries out the reaction NAD(+) + ATP = ADP + NADP(+) + H(+). Functionally, involved in the regulation of the intracellular balance of NAD and NADP, and is a key enzyme in the biosynthesis of NADP. Catalyzes specifically the phosphorylation on 2'-hydroxyl of the adenosine moiety of NAD to yield NADP. This chain is NAD kinase, found in Colwellia psychrerythraea (strain 34H / ATCC BAA-681) (Vibrio psychroerythus).